Consider the following 431-residue polypeptide: Glutamyl-tRNA reductase (431 aa).

Residues 49–52 (TCDR), S109, 114–116 (EPH), and Q120 contribute to the substrate site. C50 acts as the Nucleophile in catalysis. 189-194 (GTQEMG) provides a ligand contact to NADP(+).

The protein belongs to the glutamyl-tRNA reductase family. As to quaternary structure, homodimer.

The catalysed reaction is (S)-4-amino-5-oxopentanoate + tRNA(Glu) + NADP(+) = L-glutamyl-tRNA(Glu) + NADPH + H(+). It participates in porphyrin-containing compound metabolism; protoporphyrin-IX biosynthesis; 5-aminolevulinate from L-glutamyl-tRNA(Glu): step 1/2. The protein operates within porphyrin-containing compound metabolism; chlorophyll biosynthesis. In terms of biological role, catalyzes the NADPH-dependent reduction of glutamyl-tRNA(Glu) to glutamate 1-semialdehyde (GSA). This chain is Glutamyl-tRNA reductase, found in Rhodospirillum rubrum (strain ATCC 11170 / ATH 1.1.1 / DSM 467 / LMG 4362 / NCIMB 8255 / S1).